The following is a 487-amino-acid chain: MMSTTVRLNRFTYLTSTAKLTRYFCSHHLVDRSETALHEVIRIVSSPVGGLDDLEENLNQVSVSPSSNLVTQVIESCKNETSPRRLLRFFSWSCKSLGSSLHDKEFNYVLRVLAEKKDHTAMQILLSDLRKENRAMDKQTFSIVAETLVKVGKEEDAIGIFKILDKFSCPQDGFTVTAIISALCSRGHVKRALGVMHHHKDVISGNELSVYRSLLFGWSVQRNVKEARRVIQDMKSAGITPDLFCFNSLLTCLCERNVNRNPSGLVPEALNIMLEMRSYKIQPTSMSYNILLSCLGRTRRVRESCQILEQMKRSGCDPDTGSYYFVVRVLYLTGRFGKGNQIVDEMIERGFRPERKFYYDLIGVLCGVERVNFALQLFEKMKRSSVGGYGQVYDLLIPKLCKGGNFEKGRELWEEALSIDVTLSCSISLLDPSVTEVFKPMKMKEEAAMVDRRALNLKIHARMNKTKPKLKLKPKRRSKTKKKNLQH.

Residues 1–90 (MMSTTVRLNR…TSPRRLLRFF (90 aa)) constitute a mitochondrion transit peptide. PPR repeat units lie at residues 137 to 171 (DKQTFSIVAETLVKVGKEEDAIGIFKILDKFSCPQ), 172 to 202 (DGFTVTAIISALCSRGHVKRALGVMHHHKDV), 207 to 241 (ELSVYRSLLFGWSVQRNVKEARRVIQDMKSAGITP), 242 to 283 (DLFC…KIQP), 284 to 318 (TSMSYNILLSCLGRTRRVRESCQILEQMKRSGCDP), 319 to 353 (DTGSYYFVVRVLYLTGRFGKGNQIVDEMIERGFRP), 354 to 388 (ERKFYYDLIGVLCGVERVNFALQLFEKMKRSSVGG), and 389 to 423 (YGQVYDLLIPKLCKGGNFEKGRELWEEALSIDVTL). A disordered region spans residues 466–487 (TKPKLKLKPKRRSKTKKKNLQH).

The protein belongs to the PPR family. P subfamily.

Its subcellular location is the mitochondrion. In Arabidopsis thaliana (Mouse-ear cress), this protein is Pentatricopeptide repeat-containing protein At5g61370, mitochondrial.